The chain runs to 537 residues: MTLLALKEDRPTPKAVYNWRVYTCAAIASFASCMIGYDSAFIGTTLALPSFTKEFDFASYTPGALALLQSNIVSVYQAGAFFGCLFAYATSYFLGRRKSLIAFSVVFIIGAAIMLAADGQGRGIDPIIAGRVLAGIGVGGASNMVPIYISELAPPAVRGRLVGIYELGWQIGGLVGFWINYGVNTTMAPTRSQWLIPFAVQLIPAGLLFLGSFWIPESPRWLYANGKREEAMKVLCWIRNLEPTDRYIVQEVSFIDADLERYTRQVGNGFWKPFLSLKQRKVQWRFFLGGMLFFWQNGSGINAINYYSPTVFRSIGITGTDTGFLTTGIFGVVKMVLTIIWLLWLVDLVGRRRILFIGAAGGSLCMWFIGAYIKIADPGSNKAEDAKLTSGGIAAIFFFYLWTAFYTPSWNGTPWVINSEMFDQNTRSLGQASAAANNWFWNFIISRFTPQMFIKMEYGVYFFFASLMLLSIVFIYFFLPETKSIPLEAMDRLFEIKPVQNANKNLMAELNFDRNPEREESSSLDDKDRVTQTENAV.

At 1 to 26 (MTLLALKEDRPTPKAVYNWRVYTCAA) the chain is on the cytoplasmic side. A helical membrane pass occupies residues 27–47 (IASFASCMIGYDSAFIGTTLA). At 48–74 (LPSFTKEFDFASYTPGALALLQSNIVS) the chain is on the extracellular side. A helical transmembrane segment spans residues 75–95 (VYQAGAFFGCLFAYATSYFLG). Topologically, residues 96–98 (RRK) are cytoplasmic. Residues 99–119 (SLIAFSVVFIIGAAIMLAADG) form a helical membrane-spanning segment. At 120-131 (QGRGIDPIIAGR) the chain is on the extracellular side. The chain crosses the membrane as a helical span at residues 132 to 152 (VLAGIGVGGASNMVPIYISEL). At 153-160 (APPAVRGR) the chain is on the cytoplasmic side. Residues 161 to 181 (LVGIYELGWQIGGLVGFWINY) traverse the membrane as a helical segment. Residues 182–195 (GVNTTMAPTRSQWL) lie on the Extracellular side of the membrane. A glycan (N-linked (GlcNAc...) asparagine) is linked at Asn184. The chain crosses the membrane as a helical span at residues 196–216 (IPFAVQLIPAGLLFLGSFWIP). At 217 to 285 (ESPRWLYANG…SLKQRKVQWR (69 aa)) the chain is on the cytoplasmic side. Residues 286–306 (FFLGGMLFFWQNGSGINAINY) form a helical membrane-spanning segment. The Extracellular portion of the chain corresponds to 307 to 327 (YSPTVFRSIGITGTDTGFLTT). The chain crosses the membrane as a helical span at residues 328–349 (GIFGVVKMVLTIIWLLWLVDLV). Topologically, residues 350-352 (GRR) are cytoplasmic. A helical transmembrane segment spans residues 353–373 (RILFIGAAGGSLCMWFIGAYI). Residues 374-389 (KIADPGSNKAEDAKLT) lie on the Extracellular side of the membrane. Residues 390-410 (SGGIAAIFFFYLWTAFYTPSW) form a helical membrane-spanning segment. Topologically, residues 411–435 (NGTPWVINSEMFDQNTRSLGQASAA) are cytoplasmic. A helical transmembrane segment spans residues 436–456 (ANNWFWNFIISRFTPQMFIKM). Topologically, residues 457–458 (EY) are extracellular. A helical transmembrane segment spans residues 459–479 (GVYFFFASLMLLSIVFIYFFL). Residues 480–537 (PETKSIPLEAMDRLFEIKPVQNANKNLMAELNFDRNPEREESSSLDDKDRVTQTENAV) lie on the Cytoplasmic side of the membrane. Residues 514 to 531 (RNPEREESSSLDDKDRVT) show a composition bias toward basic and acidic residues. The interval 514–537 (RNPEREESSSLDDKDRVTQTENAV) is disordered.

It belongs to the major facilitator superfamily. Sugar transporter (TC 2.A.1.1) family.

It localises to the membrane. In terms of biological role, MFS-type transporter; part of the qa gene cluster that mediates the catabolism of quinic acid (QA) and as such, allows the use of QA as a sole carbon source. Involved in the upatke of QA. The qa cluster encodes 3 inducible enymes (qa-2, qa-3 and qa-4) catalyzing the first three reactions in the catabolism of quinic acid to protocatechuic acid (also known as 3,4-Dihydroxybenzoic acid). This Neurospora crassa (strain ATCC 24698 / 74-OR23-1A / CBS 708.71 / DSM 1257 / FGSC 987) protein is MFS-type transporter qa-x.